We begin with the raw amino-acid sequence, 246 residues long: Small ribosomal subunit protein uS2 (246 aa).

Belongs to the universal ribosomal protein uS2 family.

The polypeptide is Small ribosomal subunit protein uS2 (Helicobacter acinonychis (strain Sheeba)).